Here is a 767-residue protein sequence, read N- to C-terminus: Integrin beta-8 (767 aa).

Residues 1-21 (MCGSALAFLTAALLSLHNCQR) form the signal peptide. The Extracellular portion of the chain corresponds to 22–681 (GPALVLGAAW…SECLSGPSYL (660 aa)). The 50-residue stretch at 46-95 (RCGSANVVSCARCLQLGPECGWCVQEDFVSGGSGSERCDTVSSLISKGCP) folds into the PSI domain. Cystine bridges form between Cys-47-Cys-65, Cys-55-Cys-469, Cys-58-Cys-83, Cys-68-Cys-94, Cys-211-Cys-218, Cys-266-Cys-307, Cys-407-Cys-419, Cys-439-Cys-467, Cys-471-Cys-490, Cys-471-Cys-493, Cys-481-Cys-493, Cys-498-Cys-527, Cys-510-Cys-525, Cys-519-Cys-530, Cys-532-Cys-545, Cys-552-Cys-566, Cys-560-Cys-571, Cys-573-Cys-582, Cys-584-Cys-608, Cys-592-Cys-606, Cys-600-Cys-611, Cys-613-Cys-623, Cys-626-Cys-629, Cys-633-Cys-660, and Cys-639-Cys-656. Positions 146 to 384 (PVDLYYLVDV…NLVVEAYKKI (239 aa)) constitute a VWFA domain. The Mg(2+) site is built by Asp-154 and Ser-156. Asp-193 provides a ligand contact to Ca(2+). An N-linked (GlcNAc...) asparagine glycan is attached at Asn-233. The Ca(2+) site is built by Asn-249, Asp-251, Pro-253, and Glu-254. Residue Glu-254 coordinates Mg(2+). Asn-402 carries N-linked (GlcNAc...) asparagine glycosylation. Asn-421, Asn-431, and Asn-456 each carry an N-linked (GlcNAc...) asparagine glycan. I-EGF domains follow at residues 471–494 (CENH…PQCD), 498–546 (CHFD…QYCE), 547–583 (KDDF…DRCQ), and 584–624 (CPSA…RLCE). An N-linked (GlcNAc...) asparagine glycan is attached at Asn-647. The chain crosses the membrane as a helical span at residues 682–702 (RIFFIIFIVTFLIGLLKVLII). At 703–767 (RQVILQWNNN…NAQEAFRCNF (65 aa)) the chain is on the cytoplasmic side.

The protein belongs to the integrin beta chain family. In terms of assembly, heterodimer of an alpha and a beta subunit. Beta-8 (ITGB8) associates with alpha-V (ITGAV) to form ITGAV:ITGB8. ITGAV:ITGB8 interacts with TGFB1.

Its subcellular location is the cell membrane. Integrin alpha-V:beta-8 (ITGAV:ITGB8) is a receptor for fibronectin. It recognizes the sequence R-G-D in its ligands. Integrin alpha-V:beta-6 (ITGAV:ITGB6) mediates R-G-D-dependent release of transforming growth factor beta-1 (TGF-beta-1) from regulatory Latency-associated peptide (LAP), thereby playing a key role in TGF-beta-1 activation on the surface of activated regulatory T-cells (Tregs). Required during vasculogenesis. The protein is Integrin beta-8 of Mus musculus (Mouse).